The primary structure comprises 189 residues: NADH-quinone oxidoreductase subunit B (189 aa).

[4Fe-4S] cluster contacts are provided by C39, C40, C104, and C135.

The protein belongs to the complex I 20 kDa subunit family. In terms of assembly, NDH-1 is composed of 14 different subunits. Subunits NuoB, C, D, E, F, and G constitute the peripheral sector of the complex. [4Fe-4S] cluster is required as a cofactor.

Its subcellular location is the cell inner membrane. The catalysed reaction is a quinone + NADH + 5 H(+)(in) = a quinol + NAD(+) + 4 H(+)(out). Functionally, NDH-1 shuttles electrons from NADH, via FMN and iron-sulfur (Fe-S) centers, to quinones in the respiratory chain. The immediate electron acceptor for the enzyme in this species is believed to be a menaquinone. Couples the redox reaction to proton translocation (for every two electrons transferred, four hydrogen ions are translocated across the cytoplasmic membrane), and thus conserves the redox energy in a proton gradient. The protein is NADH-quinone oxidoreductase subunit B of Chlorobium luteolum (strain DSM 273 / BCRC 81028 / 2530) (Pelodictyon luteolum).